Reading from the N-terminus, the 475-residue chain is Chemotaxis protein MotD (475 aa).

Disordered regions lie at residues 1 to 175 (MRPL…PVGG), 195 to 243 (LQPE…SEPD), and 408 to 475 (GDSA…HVYM). Residues 9–22 (RTSAASRPAQSLSV) show a composition bias toward polar residues. Over residues 79 to 100 (ADVPASMADAASPDARPASERA) the composition is skewed to low complexity. The span at 143–155 (HSRETVHALRDAI) shows a compositional bias: basic and acidic residues. Gly residues predominate over residues 408 to 417 (GDSASGGGGQ). Over residues 427–449 (EGRERAGDDGQGRQPRDGGRAAT) the composition is skewed to basic and acidic residues.

The protein resides in the cytoplasm. Its function is as follows. Required for the rotation of the flagellar motor. Has a positive effect as flagellar rotation increases when an excess of motd is present. In Rhizobium meliloti (Ensifer meliloti), this protein is Chemotaxis protein MotD (motD).